A 559-amino-acid chain; its full sequence is Regulatory protein PHO2 (559 aa).

4 disordered regions span residues 16-88 (ATDL…KGEA), 132-158 (LRKKQHGSNKDTIPSSQSRDIANDYDR), 293-333 (INSN…AKDN), and 534-559 (PTDSELPNTPDFLKNTNELTDEHRWI). 2 stretches are compositionally biased toward low complexity: residues 24–52 (HDQQQQQQQQHDQQHNQQQQPQPQPIQTQ) and 63–74 (NDMSASSNASDS). A DNA-binding region (homeobox) is located at residues 77-136 (QRPKRTRAKGEALDVLKRKFEINPTPSLVERKKISDLIGMPEKNVRIWFQNRRAKLRKKQ). Positions 141–151 (KDTIPSSQSRD) are enriched in polar residues. Residues 293-307 (INSNNTSDKNNSNTN) are compositionally biased toward low complexity. Residues 308 to 323 (NDDDNDDNSNEDNDNS) are compositionally biased toward acidic residues. The segment covering 324–333 (SEDKRNAKDN) has biased composition (basic and acidic residues). Residue Thr542 is modified to Phosphothreonine.

It localises to the nucleus. Regulator in phosphate metabolism and acts as a derepressor of another central regulator PHO5. Binds to the upstream activator sequence (UAS) of PHO5. It also binds to the TRP4, HIS4, and CYC1 promoters. The protein is Regulatory protein PHO2 (PHO2) of Saccharomyces cerevisiae (strain ATCC 204508 / S288c) (Baker's yeast).